The primary structure comprises 513 residues: Sucrose transport protein SUC1 (513 aa).

Residues 1–11 (MGAYETEKPTK) are compositionally biased toward basic and acidic residues. The interval 1-26 (MGAYETEKPTKDAAALETQSPEDFDQ) is disordered. The Cytoplasmic portion of the chain corresponds to 1 to 32 (MGAYETEKPTKDAAALETQSPEDFDQPSPLRK). S20 is modified (phosphoserine). Residues 33 to 53 (IISVASIAAGVQFGWALQLSL) traverse the membrane as a helical segment. Over 54–67 (LTPYVQLLGIPHKW) the chain is Extracellular. The chain crosses the membrane as a helical span at residues 68–88 (SSLIWLCGPVSGMIVQPIVGF). Residues 89–101 (HSDRCRSKFGRRR) are Cytoplasmic-facing. Residues 102–122 (PFIATGAALVAVAVFLIGYAA) form a helical membrane-spanning segment. Residues 123–139 (DFGYKMGDKLEEKVKVR) are Extracellular-facing. Residues 140 to 160 (AIGIFALGFWILDVANNTLQG) traverse the membrane as a helical segment. Over 161–178 (PCRAFLADLAAGDAKRTR) the chain is Cytoplasmic. Residues 179 to 199 (VANAFFSFFMAVGNVLGYAAG) form a helical membrane-spanning segment. The Extracellular segment spans residues 200-224 (SYTNLHKMFPFTMTKACDIYCANLK). The helical transmembrane segment at 225–245 (TCFFLSITLLLIVTVTSLWYV) threads the bilayer. At 246–282 (NDKQWSPPPRNADDDEKTSSVPLFGEIFGAFKVMKRP) the chain is on the cytoplasmic side. The helical transmembrane segment at 283 to 303 (MWMLLIVTALNWIAWFPFLLF) threads the bilayer. At 304-334 (DTDWMGREVFGGDSDGNERSKKLYSLGVQSG) the chain is on the extracellular side. A helical membrane pass occupies residues 335–355 (AMGLMFNSIVLGFMSLGVEWI). The Cytoplasmic segment spans residues 356 to 365 (GRKLGGAKRL). Residues 366–386 (WGIVNFILAAGLAMTVLVTKF) traverse the membrane as a helical segment. At 387-408 (AEDHRKTAGDLAGPSASVKAGA) the chain is on the extracellular side. A helical transmembrane segment spans residues 409-429 (LSLFAVLGIPLAITFSTPFAL). Residues 430 to 441 (ASIFSSCSGAGQ) are Cytoplasmic-facing. A helical transmembrane segment spans residues 442–462 (GLSLGVLNLAIVIPQMIVSLG). Residues 463–474 (GGPFDALFGGGN) lie on the Extracellular side of the membrane. The chain crosses the membrane as a helical span at residues 475–495 (LPAFIVAAIAAAISGVLALTV). Residues 496 to 513 (LPSPPPDAPKATTMGGFH) lie on the Cytoplasmic side of the membrane.

The protein belongs to the glycoside-pentoside-hexuronide (GPH) cation symporter transporter (TC 2.A.2.4) family. As to expression, expressed in flowers (at protein level). Highly expressed in pollen. Expressed in pollen tubes and root vascular cylinder, pericycle and endodermis.

Its subcellular location is the membrane. The enzyme catalyses sucrose(out) + H(+)(out) = sucrose(in) + H(+)(in). The protein operates within glycan biosynthesis; sucrose metabolism. With respect to regulation, inhibited by DEPC, protonophores (e.g. dinitrophenol and carbonyl cyanide m-chlorophenyl-hydrazone (CCCP)), and SH group inhibitors (e.g. N-ethylmaleimide (NEM) and p-chloromercuriphenyl sulphonic acid (PCMPS)). In terms of biological role, responsible for the transport of sucrose into the cell, with the concomitant uptake of protons (symport system). This transport is both voltage- and energy-dependent. Can also transport other glucosides such as maltose, alpha-phenylglucoside and beta-phenylglucoside. May also transport biotin. Required for normal pollen germination and anthocyanin accumulation induced by sucrose. The protein is Sucrose transport protein SUC1 of Arabidopsis thaliana (Mouse-ear cress).